Reading from the N-terminus, the 287-residue chain is Probable 3-hydroxybutyryl-CoA dehydrogenase (287 aa).

This sequence belongs to the 3-hydroxyacyl-CoA dehydrogenase family.

The catalysed reaction is (3S)-3-hydroxybutanoyl-CoA + NADP(+) = acetoacetyl-CoA + NADPH + H(+). It participates in lipid metabolism; butanoate metabolism. This is Probable 3-hydroxybutyryl-CoA dehydrogenase (mmgB) from Bacillus subtilis (strain 168).